Reading from the N-terminus, the 233-residue chain is uncharacterized protein (233 aa).

The helical transmembrane segment at 21-41 (LNILIAIVSILIVVVAANLFI) threads the bilayer. The disordered stretch occupies residues 44–163 (PSSKDVSKDS…GEHAATYDSS (120 aa)). Basic and acidic residues-rich tracts occupy residues 48-57 (DVSKDSETAQ), 66-108 (KTEK…KKDD), and 135-144 (DVEKTYENPD).

It localises to the cell membrane. This is an uncharacterized protein from Bacillus subtilis (strain 168).